Reading from the N-terminus, the 549-residue chain is Glucose-6-phosphate isomerase (549 aa).

Residue Glu355 is the Proton donor of the active site. Residues His386 and Lys514 contribute to the active site.

The protein belongs to the GPI family.

The protein localises to the cytoplasm. The catalysed reaction is alpha-D-glucose 6-phosphate = beta-D-fructose 6-phosphate. Its pathway is carbohydrate biosynthesis; gluconeogenesis. The protein operates within carbohydrate degradation; glycolysis; D-glyceraldehyde 3-phosphate and glycerone phosphate from D-glucose: step 2/4. In terms of biological role, catalyzes the reversible isomerization of glucose-6-phosphate to fructose-6-phosphate. This Salmonella paratyphi A (strain AKU_12601) protein is Glucose-6-phosphate isomerase.